Consider the following 395-residue polypeptide: Xylose isomerase (395 aa).

Active-site residues include histidine 54 and aspartate 57. 7 residues coordinate Mg(2+): glutamate 181, glutamate 217, histidine 220, aspartate 245, aspartate 255, aspartate 257, and aspartate 293.

It belongs to the xylose isomerase family. In terms of assembly, homotetramer. Mg(2+) serves as cofactor.

It is found in the cytoplasm. The catalysed reaction is alpha-D-xylose = alpha-D-xylulofuranose. The chain is Xylose isomerase (xylA) from Arthrobacter sp. (strain NRRL B3728).